The sequence spans 89 residues: Small ribosomal subunit protein bS20 (89 aa).

Positions Met1 to Met29 are disordered.

The protein belongs to the bacterial ribosomal protein bS20 family.

Binds directly to 16S ribosomal RNA. The sequence is that of Small ribosomal subunit protein bS20 from Haemophilus influenzae (strain 86-028NP).